Reading from the N-terminus, the 688-residue chain is PTS system glucoside-specific EIICBA component (688 aa).

Residues 3 to 427 (KKLFGQLQRI…FKLKTPGRED (425 aa)) form the PTS EIIC type-1 domain. 10 helical membrane passes run 12–32 (IGKA…LLAF), 81–101 (LGLA…YLIM), 137–157 (LVLG…MGAL), 182–202 (FVPI…SFAW), 223–243 (LTTF…LHHI), 284–304 (AFTT…AFAI), 315–335 (VVGG…ITEP), 340–360 (FLFV…TSFL), 364–384 (LLGV…ILYG), and 395–415 (LVIP…DFAI). A PTS EIIB type-1 domain is found at 438–519 (AKLPFDVLDA…AKIMSGEITK (82 aa)). Cysteine 460 functions as the Phosphocysteine intermediate; for EIIB activity in the catalytic mechanism. The region spanning 560 to 664 (DQVFAGKMMG…SIVTPMIITN (105 aa)) is the PTS EIIA type-1 domain. The Tele-phosphohistidine intermediate; for EIIA activity role is filled by histidine 612.

It is found in the cell membrane. Functionally, the phosphoenolpyruvate-dependent sugar phosphotransferase system (sugar PTS), a major carbohydrate active -transport system, catalyzes the phosphorylation of incoming sugar substrates concomitantly with their translocation across the cell membrane. This system is involved in alpha- and beta-glucoside transport. This Staphylococcus aureus (strain bovine RF122 / ET3-1) protein is PTS system glucoside-specific EIICBA component (glcB).